The chain runs to 69 residues: DNA gyrase inhibitor YacG (69 aa).

Positions 13, 16, 32, and 36 each coordinate Zn(2+).

It belongs to the DNA gyrase inhibitor YacG family. In terms of assembly, interacts with GyrB. It depends on Zn(2+) as a cofactor.

Functionally, inhibits all the catalytic activities of DNA gyrase by preventing its interaction with DNA. Acts by binding directly to the C-terminal domain of GyrB, which probably disrupts DNA binding by the gyrase. In Neisseria gonorrhoeae (strain ATCC 700825 / FA 1090), this protein is DNA gyrase inhibitor YacG.